Here is a 290-residue protein sequence, read N- to C-terminus: Putative phosphoenolpyruvate synthase regulatory protein (290 aa).

170–177 serves as a coordination point for ADP; sequence GVSRCGKT.

This sequence belongs to the pyruvate, phosphate/water dikinase regulatory protein family. PSRP subfamily.

It carries out the reaction [pyruvate, water dikinase] + ADP = [pyruvate, water dikinase]-phosphate + AMP + H(+). The catalysed reaction is [pyruvate, water dikinase]-phosphate + phosphate + H(+) = [pyruvate, water dikinase] + diphosphate. Functionally, bifunctional serine/threonine kinase and phosphorylase involved in the regulation of the phosphoenolpyruvate synthase (PEPS) by catalyzing its phosphorylation/dephosphorylation. This is Putative phosphoenolpyruvate synthase regulatory protein (ydiA) from Enterobacter agglomerans (Erwinia herbicola).